The following is a 183-amino-acid chain: Isopentenyl-diphosphate Delta-isomerase (183 aa).

The Mn(2+) site is built by His26 and His33. The Nudix hydrolase domain maps to 31 to 165; it reads SLHLAFSSWL…PWAFSPWMVS (135 aa). Residue Cys68 is part of the active site. His70 contacts Mn(2+). Residue Glu88 participates in Mg(2+) binding. Mn(2+) is bound by residues Glu115 and Glu117. Glu117 is an active-site residue.

Belongs to the IPP isomerase type 1 family. In terms of assembly, homodimer. Requires Mg(2+) as cofactor. The cofactor is Mn(2+).

The protein resides in the cytoplasm. The catalysed reaction is isopentenyl diphosphate = dimethylallyl diphosphate. It functions in the pathway isoprenoid biosynthesis; dimethylallyl diphosphate biosynthesis; dimethylallyl diphosphate from isopentenyl diphosphate: step 1/1. Its function is as follows. Catalyzes the 1,3-allylic rearrangement of the homoallylic substrate isopentenyl (IPP) to its highly electrophilic allylic isomer, dimethylallyl diphosphate (DMAPP). This is Isopentenyl-diphosphate Delta-isomerase from Enterobacter sp. (strain 638).